The following is a 250-amino-acid chain: AA9 family lytic polysaccharide monooxygenase F (250 aa).

The N-terminal stretch at Met-1–Ala-18 is a signal peptide. His-19 is a binding site for Cu(2+). Asn-24 and Asn-85 each carry an N-linked (GlcNAc...) asparagine glycan. 2 disulfides stabilise this stretch: Cys-70/Cys-199 and Cys-169/Cys-250. A Cu(2+)-binding site is contributed by His-108. A glycan (N-linked (GlcNAc...) asparagine) is linked at Asn-146. Residues His-185 and Gln-194 each coordinate O2. Tyr-196 contacts Cu(2+).

Belongs to the polysaccharide monooxygenase AA9 family. The cofactor is Cu(2+).

The protein localises to the secreted. The enzyme catalyses [(1-&gt;4)-beta-D-glucosyl]n+m + reduced acceptor + O2 = 4-dehydro-beta-D-glucosyl-[(1-&gt;4)-beta-D-glucosyl]n-1 + [(1-&gt;4)-beta-D-glucosyl]m + acceptor + H2O.. Its function is as follows. Lytic polysaccharide monooxygenase (LPMO) that depolymerizes crystalline and amorphous polysaccharides via the oxidation of scissile alpha- or beta-(1-4)-glycosidic bonds, yielding C1 and C4 oxidation products. Catalysis by LPMOs requires the reduction of the active-site copper from Cu(II) to Cu(I) by a reducing agent and H(2)O(2) or O(2) as a cosubstrate. The sequence is that of AA9 family lytic polysaccharide monooxygenase F from Botryotinia fuckeliana (strain B05.10) (Noble rot fungus).